A 37-amino-acid polypeptide reads, in one-letter code: Large ribosomal subunit protein bL36c (37 aa).

Belongs to the bacterial ribosomal protein bL36 family.

The protein resides in the plastid. Its subcellular location is the chloroplast. The polypeptide is Large ribosomal subunit protein bL36c (Staurastrum punctulatum (Green alga)).